A 174-amino-acid chain; its full sequence is Ubiquitin-like protein 4B (174 aa).

A Ubiquitin-like domain is found at M1–K76. Residues E141–A156 show a composition bias toward basic and acidic residues. The disordered stretch occupies residues E141–Q174. The segment covering D163–Q174 has biased composition (acidic residues).

It localises to the cytoplasm. The sequence is that of Ubiquitin-like protein 4B (UBL4B) from Homo sapiens (Human).